A 330-amino-acid chain; its full sequence is uncharacterized protein (330 aa).

His-257 is an active-site residue.

Belongs to the IUNH family.

This is an uncharacterized protein from Schizosaccharomyces pombe (strain 972 / ATCC 24843) (Fission yeast).